The primary structure comprises 377 residues: Compound eye opsin BCRH1 (377 aa).

The Extracellular segment spans residues 1 to 53; that stretch reads MANVTGPQMAFYGSGAATFGYPEGMTVADFVPDRVKHMVLDHWYNYPPVNPMW. N-linked (GlcNAc...) asparagine glycosylation is present at asparagine 3. The helical transmembrane segment at 54–78 threads the bilayer; it reads HYLLGVVYLFLGVISIAGNGLVIYL. Over 79-90 the chain is Cytoplasmic; sequence YMKSQALKTPAN. Residues 91–115 form a helical membrane-spanning segment; the sequence is MLIVNLALSDLIMLTTNFPPFCYNC. Over 116–131 the chain is Extracellular; that stretch reads FSGGRWMFSGTYCEIY. Cysteine 128 and cysteine 205 are oxidised to a cystine. The helical transmembrane segment at 132–151 threads the bilayer; that stretch reads AALGAITGVCSIWTLCMISF. The Cytoplasmic portion of the chain corresponds to 152–170; it reads DRYNIICNGFNGPKLTQGK. Residues 171–194 traverse the membrane as a helical segment; sequence ATFMCGLAWVISVGWSLPPFFGWG. Over 195-218 the chain is Extracellular; sequence SYTLEGILDSCSYDYFTRDMNTIT. A helical membrane pass occupies residues 219–246; it reads YNICIFIFDFFLPASVIVFSYVFIVKAI. Residues 247–281 are Cytoplasmic-facing; sequence FAHEAAMRAQAKKMNVTNLRSNEAETQRAEIRIAK. A helical membrane pass occupies residues 282–305; the sequence is TALVNVSLWFICWTPYAAITIQGL. The Extracellular segment spans residues 306 to 313; the sequence is LGNAEGIT. A helical transmembrane segment spans residues 314-338; sequence PLLTTLPALLAKSCSCYNPFVYAIS. Position 325 is an N6-(retinylidene)lysine (lysine 325). The Cytoplasmic segment spans residues 339–377; it reads HPKFRLAITQHLPWFCVHEKDPNDVEENQSSNTQTQEKS.

The protein belongs to the G-protein coupled receptor 1 family. Opsin subfamily. Phosphorylated on some or all of the serine and threonine residues present in the C-terminal region. As to expression, expressed in all of the seven retinular cells (R1-R7) forming the main rhabdom in each ommatidium.

Its subcellular location is the membrane. In terms of biological role, visual pigments are the light-absorbing molecules that mediate vision. They consist of an apoprotein, opsin, covalently linked to cis-retinal. This opsin produces visual pigments with maximal absorption in the blue-green region of the spectrum. This Hemigrapsus sanguineus (Asian shore crab) protein is Compound eye opsin BCRH1.